The primary structure comprises 237 residues: LexA repressor (237 aa).

A DNA-binding region (H-T-H motif) is located at residues 26–46; the sequence is FDEMKIALELTSKSGIHRLIT. Active-site for autocatalytic cleavage activity residues include S158 and K196.

It belongs to the peptidase S24 family. As to quaternary structure, homodimer.

It catalyses the reaction Hydrolysis of Ala-|-Gly bond in repressor LexA.. Represses a number of genes involved in the response to DNA damage (SOS response), including recA and lexA. In the presence of single-stranded DNA, RecA interacts with LexA causing an autocatalytic cleavage which disrupts the DNA-binding part of LexA, leading to derepression of the SOS regulon and eventually DNA repair. The polypeptide is LexA repressor (Bartonella quintana (strain Toulouse) (Rochalimaea quintana)).